Here is a 171-residue protein sequence, read N- to C-terminus: UPF0312 protein SAR2769 (171 aa).

It belongs to the UPF0312 family.

The polypeptide is UPF0312 protein SAR2769 (Staphylococcus aureus (strain MRSA252)).